The primary structure comprises 388 residues: L-lactate dehydrogenase (388 aa).

The FMN hydroxy acid dehydrogenase domain maps to 1–380 (MIISAASDYR…SADALSRVTR (380 aa)). Tyr-24 provides a ligand contact to substrate. FMN contacts are provided by Ser-106 and Gln-127. Tyr-129 lines the substrate pocket. Position 155 (Thr-155) interacts with FMN. Arg-164 lines the substrate pocket. Position 251 (Lys-251) interacts with FMN. Catalysis depends on His-275, which acts as the Proton acceptor. Residue Arg-278 coordinates substrate. 306–330 (DSGIRSGLDVVRMLALGADAVLLGR) is an FMN binding site.

This sequence belongs to the FMN-dependent alpha-hydroxy acid dehydrogenase family. The cofactor is FMN.

The protein localises to the cell inner membrane. The enzyme catalyses (S)-lactate + A = pyruvate + AH2. Its function is as follows. Catalyzes the conversion of L-lactate to pyruvate. Is coupled to the respiratory chain. This chain is L-lactate dehydrogenase, found in Xanthomonas euvesicatoria pv. vesicatoria (strain 85-10) (Xanthomonas campestris pv. vesicatoria).